The following is a 120-amino-acid chain: Cell cycle protein GpsB (120 aa).

Positions 32–68 form a coiled coil; sequence LDDIIKDYETYAALVKELREENRRLKEELAAKPVEKA. The tract at residues 63 to 88 is disordered; it reads KPVEKAPVQPTQPVQSTQATQSTVES. The span at 68-86 shows a compositional bias: low complexity; it reads APVQPTQPVQSTQATQSTV.

The protein belongs to the GpsB family. In terms of assembly, forms polymers through the coiled coil domains. Interacts with PBP1, MreC and EzrA.

The protein localises to the cytoplasm. Divisome component that associates with the complex late in its assembly, after the Z-ring is formed, and is dependent on DivIC and PBP2B for its recruitment to the divisome. Together with EzrA, is a key component of the system that regulates PBP1 localization during cell cycle progression. Its main role could be the removal of PBP1 from the cell pole after pole maturation is completed. Also contributes to the recruitment of PBP1 to the division complex. Not essential for septum formation. This chain is Cell cycle protein GpsB, found in Streptococcus sanguinis (strain SK36).